The chain runs to 195 residues: Endoribonuclease YbeY (195 aa).

Positions 153, 157, and 163 each coordinate Zn(2+).

It belongs to the endoribonuclease YbeY family. The cofactor is Zn(2+).

It localises to the cytoplasm. In terms of biological role, single strand-specific metallo-endoribonuclease involved in late-stage 70S ribosome quality control and in maturation of the 3' terminus of the 16S rRNA. This chain is Endoribonuclease YbeY, found in Prochlorococcus marinus (strain SARG / CCMP1375 / SS120).